The following is an 84-amino-acid chain: Small ribosomal subunit protein uS17c (84 aa).

It belongs to the universal ribosomal protein uS17 family. Part of the 30S ribosomal subunit.

It localises to the plastid. Its subcellular location is the chloroplast. In terms of biological role, one of the primary rRNA binding proteins, it binds specifically to the 5'-end of 16S ribosomal RNA. The sequence is that of Small ribosomal subunit protein uS17c (rps17) from Trieres chinensis (Marine centric diatom).